A 153-amino-acid chain; its full sequence is Large ribosomal subunit protein uL22 (153 aa).

The tract at residues 110-153 (ITVIVESRPPKQKGASAASARSRRAQGSKAAATKKSAETKEGSE) is disordered. The span at 144–153 (KSAETKEGSE) shows a compositional bias: basic and acidic residues.

The protein belongs to the universal ribosomal protein uL22 family. In terms of assembly, part of the 50S ribosomal subunit.

Its function is as follows. This protein binds specifically to 23S rRNA; its binding is stimulated by other ribosomal proteins, e.g. L4, L17, and L20. It is important during the early stages of 50S assembly. It makes multiple contacts with different domains of the 23S rRNA in the assembled 50S subunit and ribosome. The globular domain of the protein is located near the polypeptide exit tunnel on the outside of the subunit, while an extended beta-hairpin is found that lines the wall of the exit tunnel in the center of the 70S ribosome. The protein is Large ribosomal subunit protein uL22 of Mycolicibacterium smegmatis (strain ATCC 700084 / mc(2)155) (Mycobacterium smegmatis).